The chain runs to 323 residues: Phosphate acyltransferase (323 aa).

It belongs to the PlsX family. In terms of assembly, homodimer. Probably interacts with PlsY.

It is found in the cytoplasm. The enzyme catalyses a fatty acyl-[ACP] + phosphate = an acyl phosphate + holo-[ACP]. Its pathway is lipid metabolism; phospholipid metabolism. In terms of biological role, catalyzes the reversible formation of acyl-phosphate (acyl-PO(4)) from acyl-[acyl-carrier-protein] (acyl-ACP). This enzyme utilizes acyl-ACP as fatty acyl donor, but not acyl-CoA. The chain is Phosphate acyltransferase from Finegoldia magna (strain ATCC 29328 / DSM 20472 / WAL 2508) (Peptostreptococcus magnus).